The chain runs to 435 residues: tRNA-2-methylthio-N(6)-dimethylallyladenosine synthase (435 aa).

The MTTase N-terminal domain occupies 1-117 (MKYFIKTYGC…MPKLLEDVKV (117 aa)). Residues cysteine 10, cysteine 46, cysteine 80, cysteine 156, cysteine 160, and cysteine 163 each coordinate [4Fe-4S] cluster. The Radical SAM core domain maps to 142-370 (RDNSYCAYVT…LEIQKAITSK (229 aa)). The TRAM domain occupies 373–433 (QRYKNTVQKV…FQSLDGVVQN (61 aa)).

It belongs to the methylthiotransferase family. MiaB subfamily. Monomer. The cofactor is [4Fe-4S] cluster.

It localises to the cytoplasm. The catalysed reaction is N(6)-dimethylallyladenosine(37) in tRNA + (sulfur carrier)-SH + AH2 + 2 S-adenosyl-L-methionine = 2-methylsulfanyl-N(6)-dimethylallyladenosine(37) in tRNA + (sulfur carrier)-H + 5'-deoxyadenosine + L-methionine + A + S-adenosyl-L-homocysteine + 2 H(+). Its function is as follows. Catalyzes the methylthiolation of N6-(dimethylallyl)adenosine (i(6)A), leading to the formation of 2-methylthio-N6-(dimethylallyl)adenosine (ms(2)i(6)A) at position 37 in tRNAs that read codons beginning with uridine. This chain is tRNA-2-methylthio-N(6)-dimethylallyladenosine synthase, found in Hydrogenobaculum sp. (strain Y04AAS1).